The primary structure comprises 108 residues: Nitrite reductase (NADH) small subunit (108 aa).

In terms of assembly, associates with NirB.

It localises to the cytoplasm. The enzyme catalyses NH4(+) + 3 NAD(+) + 2 H2O = nitrite + 3 NADH + 5 H(+). Required for activity of the reductase. This chain is Nitrite reductase (NADH) small subunit (nirD), found in Salmonella typhi.